The chain runs to 453 residues: Putative sodium-coupled neutral amino acid transporter 11 (453 aa).

Residues 1 to 34 are disordered; that stretch reads MSYQQPQLRGPLQRETDPSDRESLVSGHEHGGKS. Residues 12 to 32 are compositionally biased toward basic and acidic residues; that stretch reads LQRETDPSDRESLVSGHEHGG. The next 11 membrane-spanning stretches (helical) occupy residues 39-59, 66-86, 106-126, 152-172, 179-199, 222-242, 262-282, 299-319, 337-357, 359-379, and 399-419; these read AVFN…PYSM, LGIL…VLLI, GFPG…IAMI, FISR…PLSL, LGKI…VVVT, AIQA…CFLV, ILVS…TFTG, VTFG…IECF, VFHV…SLLI, CLGI…IFII, and MACV…VMAI.

This sequence belongs to the amino acid/polyamine transporter 2 family. Widely expressed.

It localises to the membrane. In terms of biological role, putative sodium-dependent amino acid/proton antiporter. The sequence is that of Putative sodium-coupled neutral amino acid transporter 11 (Slc38a11) from Rattus norvegicus (Rat).